The sequence spans 180 residues: MFPMVTGFMSYGQQTIRATRYIGQSFITTLSHTNRLPITIHYPYEKSITPERFRGRIHFEFDKCIACEVCVRVCPIDLPVVDWRFEKDIKRKQLLNYSIDFGVCIFCGNCVEYCPTSCLSMTEEYELSTYDRHELNYNQIALSRLPISIMGDYTIQTIRNSSESKINKEKSSNSRTITDY.

2 4Fe-4S ferredoxin-type domains span residues 55-84 (GRIH…VDWR) and 95-124 (LNYS…MTEE). The [4Fe-4S] cluster site is built by cysteine 64, cysteine 67, cysteine 70, cysteine 74, cysteine 104, cysteine 107, cysteine 110, and cysteine 114.

Belongs to the complex I 23 kDa subunit family. In terms of assembly, NDH is composed of at least 16 different subunits, 5 of which are encoded in the nucleus. Requires [4Fe-4S] cluster as cofactor.

The protein localises to the plastid. Its subcellular location is the chloroplast thylakoid membrane. The catalysed reaction is a plastoquinone + NADH + (n+1) H(+)(in) = a plastoquinol + NAD(+) + n H(+)(out). It catalyses the reaction a plastoquinone + NADPH + (n+1) H(+)(in) = a plastoquinol + NADP(+) + n H(+)(out). Functionally, NDH shuttles electrons from NAD(P)H:plastoquinone, via FMN and iron-sulfur (Fe-S) centers, to quinones in the photosynthetic chain and possibly in a chloroplast respiratory chain. The immediate electron acceptor for the enzyme in this species is believed to be plastoquinone. Couples the redox reaction to proton translocation, and thus conserves the redox energy in a proton gradient. In Triticum aestivum (Wheat), this protein is NAD(P)H-quinone oxidoreductase subunit I, chloroplastic.